Consider the following 1254-residue polypeptide: AF4/FMR2 family member 3 (1254 aa).

Over residues 45–62 (YEPDRNALRRKERERRSQ) the composition is skewed to basic and acidic residues. Disordered stretches follow at residues 45–90 (YEPD…GDEL), 139–190 (AESR…AAQQ), 261–324 (RPMD…GENN), 350–534 (EPSK…EGQD), and 552–752 (KTTC…SVGS). Polar residues-rich tracts occupy residues 67 to 76 (DSGSFNSGYS) and 143 to 158 (AQPQPSTVCSTASSTP). Polar residues predominate over residues 359–369 (KDSQLVSSGHS). Positions 406–418 (QQAAQRTALRALA) are enriched in low complexity. Positions 421-433 (SVVQQTNCRGSAP) are enriched in polar residues. Positions 441–472 (SSSSGGSSSSSDSESTSGSDSETESSSSSSES) are enriched in low complexity. Residues 552 to 561 (KTTCKEEQRP) show a composition bias toward basic and acidic residues. The span at 577–605 (SPPAAVAVTAAALPPAVPSAPTESAPAPT) shows a compositional bias: low complexity. A compositionally biased stretch (basic and acidic residues) spans 615-633 (RRTERTSAGDGANCHRPEE). Composition is skewed to low complexity over residues 694–704 (TESSSSSSSSD) and 732–749 (AASSNNNSNSNSSTSRAS). Phosphoserine is present on serine 782. Residues 813–883 (PGVLSAPSAK…ASTNNTLSGN (71 aa)) form a disordered region. Positions 857–869 (REIKKVQGRKESA) are enriched in basic and acidic residues. The segment covering 873 to 883 (AASTNNTLSGN) has biased composition (polar residues). Position 908 is a phosphoserine (serine 908). Disordered regions lie at residues 919 to 991 (ASED…HRDC) and 1128 to 1171 (AAQA…SGLS). Polar residues-rich tracts occupy residues 922 to 941 (DLTSSSRPHGNGLLTSASSN) and 960 to 985 (ASHNSSENGTLHSKSRPQTEPWSPGS). 2 stretches are compositionally biased toward low complexity: residues 1132–1146 (PSPWGSSGKSTGSPS) and 1154–1171 (PASSVGSQGSLSSSSGLS).

This sequence belongs to the AF4 family. In terms of tissue distribution, highest levels found in lymphoid tissues, lower levels in brain and lung.

Its subcellular location is the nucleus. Putative transcription activator that may function in lymphoid development and oncogenesis. In Mus musculus (Mouse), this protein is AF4/FMR2 family member 3 (Aff3).